Reading from the N-terminus, the 248-residue chain is Ankyrin repeat domain-containing protein 45 (248 aa).

Composition is skewed to acidic residues over residues 1–10 and 22–33; these read MEPEETLESE and EYEESQEAEETG. The segment at 1–42 is disordered; it reads MEPEETLESESSEKSLFSSQQEYEESQEAEETGAENPLLQPT. 2 ANK repeats span residues 75 to 104 and 108 to 137; these read VGRNLLYAACMAGKSDVIKALAKYGVNLNE and RGYTLLHCAAAWGRLETLKALVELDVDIEA.

It localises to the cytoplasm. The protein resides in the midbody. It is found in the midbody ring. The protein localises to the cleavage furrow. Functionally, may play a role during cell division. This chain is Ankyrin repeat domain-containing protein 45 (Ankrd45), found in Mus musculus (Mouse).